The chain runs to 264 residues: Zinc import ATP-binding protein ZnuC (264 aa).

One can recognise an ABC transporter domain in the interval 20–235; that stretch reads VQLKNIEVTF…PNFIHFFGDQ (216 aa). 52 to 59 provides a ligand contact to ATP; it reads GPNGGGKS.

It belongs to the ABC transporter superfamily. Zinc importer (TC 3.A.1.15.5) family. The complex is composed of two ATP-binding proteins (ZnuC), two transmembrane proteins (ZnuB) and a solute-binding protein (ZnuA).

It is found in the cell inner membrane. It carries out the reaction Zn(2+)(out) + ATP(in) + H2O(in) = Zn(2+)(in) + ADP(in) + phosphate(in) + H(+)(in). Part of the ABC transporter complex ZnuABC involved in zinc import. Responsible for energy coupling to the transport system. The protein is Zinc import ATP-binding protein ZnuC of Haemophilus ducreyi (strain 35000HP / ATCC 700724).